The chain runs to 262 residues: 3-methyl-2-oxobutanoate hydroxymethyltransferase (262 aa).

Mg(2+)-binding residues include D42 and D81. 3-methyl-2-oxobutanoate contacts are provided by residues 42–43, D81, and K110; that span reads DS. E112 lines the Mg(2+) pocket. The active-site Proton acceptor is the E180.

Belongs to the PanB family. Homodecamer; pentamer of dimers. Mg(2+) serves as cofactor.

It localises to the cytoplasm. It carries out the reaction 3-methyl-2-oxobutanoate + (6R)-5,10-methylene-5,6,7,8-tetrahydrofolate + H2O = 2-dehydropantoate + (6S)-5,6,7,8-tetrahydrofolate. The protein operates within cofactor biosynthesis; (R)-pantothenate biosynthesis; (R)-pantoate from 3-methyl-2-oxobutanoate: step 1/2. Catalyzes the reversible reaction in which hydroxymethyl group from 5,10-methylenetetrahydrofolate is transferred onto alpha-ketoisovalerate to form ketopantoate. The sequence is that of 3-methyl-2-oxobutanoate hydroxymethyltransferase from Legionella pneumophila (strain Paris).